The chain runs to 492 residues: Bifunctional purine biosynthesis protein PurH (492 aa).

The MGS-like domain occupies 1 to 144; sequence MKKAILSVSN…KNYKHVTTIV (144 aa).

It belongs to the PurH family.

The enzyme catalyses (6R)-10-formyltetrahydrofolate + 5-amino-1-(5-phospho-beta-D-ribosyl)imidazole-4-carboxamide = 5-formamido-1-(5-phospho-D-ribosyl)imidazole-4-carboxamide + (6S)-5,6,7,8-tetrahydrofolate. The catalysed reaction is IMP + H2O = 5-formamido-1-(5-phospho-D-ribosyl)imidazole-4-carboxamide. The protein operates within purine metabolism; IMP biosynthesis via de novo pathway; 5-formamido-1-(5-phospho-D-ribosyl)imidazole-4-carboxamide from 5-amino-1-(5-phospho-D-ribosyl)imidazole-4-carboxamide (10-formyl THF route): step 1/1. Its pathway is purine metabolism; IMP biosynthesis via de novo pathway; IMP from 5-formamido-1-(5-phospho-D-ribosyl)imidazole-4-carboxamide: step 1/1. The chain is Bifunctional purine biosynthesis protein PurH from Staphylococcus aureus (strain JH1).